The sequence spans 310 residues: ADP-L-glycero-D-manno-heptose-6-epimerase (310 aa).

NADP(+) is bound by residues 10–11 (FI), 31–32 (DN), Lys-38, Lys-53, 75–79 (EGACS), and Asn-92. Tyr-140 serves as the catalytic Proton acceptor. Position 144 (Lys-144) interacts with NADP(+). Asn-169 contributes to the substrate binding site. Residues Val-170 and Lys-178 each coordinate NADP(+). The active-site Proton acceptor is the Lys-178. Residues Ser-180, His-187, 201–204 (FEGS), Arg-209, and Tyr-272 contribute to the substrate site.

It belongs to the NAD(P)-dependent epimerase/dehydratase family. HldD subfamily. Homopentamer. NADP(+) is required as a cofactor.

It catalyses the reaction ADP-D-glycero-beta-D-manno-heptose = ADP-L-glycero-beta-D-manno-heptose. It functions in the pathway nucleotide-sugar biosynthesis; ADP-L-glycero-beta-D-manno-heptose biosynthesis; ADP-L-glycero-beta-D-manno-heptose from D-glycero-beta-D-manno-heptose 7-phosphate: step 4/4. Its function is as follows. Catalyzes the interconversion between ADP-D-glycero-beta-D-manno-heptose and ADP-L-glycero-beta-D-manno-heptose via an epimerization at carbon 6 of the heptose. This is ADP-L-glycero-D-manno-heptose-6-epimerase from Klebsiella pneumoniae subsp. pneumoniae (strain ATCC 700721 / MGH 78578).